A 92-amino-acid chain; its full sequence is Large ribosomal subunit protein bL31 (92 aa).

The tract at residues Gly66–Ser92 is disordered. Positions Ala70 to Lys80 are enriched in low complexity.

This sequence belongs to the bacterial ribosomal protein bL31 family. Type A subfamily. In terms of assembly, part of the 50S ribosomal subunit.

Binds the 23S rRNA. The protein is Large ribosomal subunit protein bL31 of Synechococcus sp. (strain RCC307).